Reading from the N-terminus, the 196-residue chain is UPF0200 protein MK0400 (196 aa).

7 to 14 (GMPGAGKG) provides a ligand contact to ATP.

The protein belongs to the UPF0200 family.

The sequence is that of UPF0200 protein MK0400 from Methanopyrus kandleri (strain AV19 / DSM 6324 / JCM 9639 / NBRC 100938).